The primary structure comprises 566 residues: CTP synthase (566 aa).

The tract at residues M1–L265 is amidoligase domain. Residue S13 participates in CTP binding. S13 lines the UTP pocket. ATP-binding positions include S14–I19 and D71. Mg(2+) contacts are provided by D71 and E139. Residues D146–E148, K186–Q191, and K222 contribute to the CTP site. UTP-binding positions include K186–Q191 and K222. The Glutamine amidotransferase type-1 domain maps to E290–K543. Residue G351 participates in L-glutamine binding. Residue C378 is the Nucleophile; for glutamine hydrolysis of the active site. Residues L379 to Q382, E402, and R469 each bind L-glutamine. Residues H516 and E518 contribute to the active site. Residues P545 to Q566 form a disordered region.

It belongs to the CTP synthase family. Homotetramer.

The catalysed reaction is UTP + L-glutamine + ATP + H2O = CTP + L-glutamate + ADP + phosphate + 2 H(+). It catalyses the reaction L-glutamine + H2O = L-glutamate + NH4(+). It carries out the reaction UTP + NH4(+) + ATP = CTP + ADP + phosphate + 2 H(+). It participates in pyrimidine metabolism; CTP biosynthesis via de novo pathway; CTP from UDP: step 2/2. Its activity is regulated as follows. Allosterically activated by GTP, when glutamine is the substrate; GTP has no effect on the reaction when ammonia is the substrate. The allosteric effector GTP functions by stabilizing the protein conformation that binds the tetrahedral intermediate(s) formed during glutamine hydrolysis. Inhibited by the product CTP, via allosteric rather than competitive inhibition. Functionally, catalyzes the ATP-dependent amination of UTP to CTP with either L-glutamine or ammonia as the source of nitrogen. Regulates intracellular CTP levels through interactions with the four ribonucleotide triphosphates. This Nitrosospira multiformis (strain ATCC 25196 / NCIMB 11849 / C 71) protein is CTP synthase.